Here is a 364-residue protein sequence, read N- to C-terminus: MSHNTFGHLFRVTTWGESHGPAIGCVVDGCPPGIHFTQAEIQADLDRRRPGQSRFVTQRREPDEVKILSGVMQDGETLVTTGTPISMLIENVDQRSKDYGEIAERYRPGHADYTYDAKYGVRDYRGGGRSSARETATRVAAGALARKIVPGMVVRGALISMGEKEIDRANWDWDFLHDPENPFFTPDPKSVSEFADYLDGVRKAGSSVGAVIEIVAEGVPAGLGAPLYGKLDQDICANLMSINAVKGVEIGIGFQAARIHGEENADEMRSGNDGYPRFLSNNAGGILGGISTGQPIIARFAVKPTSSILTPRRSIDRKGAEVEVVTKGRHDPCVGIRAVPIGEAMVACAIADHYLRHRGQTGKG.

NADP(+)-binding residues include arginine 48 and arginine 54. FMN-binding positions include 129–131 (RSS), 243–244 (NA), glycine 288, 303–307 (KPTSS), and arginine 329.

This sequence belongs to the chorismate synthase family. As to quaternary structure, homotetramer. FMNH2 serves as cofactor.

The catalysed reaction is 5-O-(1-carboxyvinyl)-3-phosphoshikimate = chorismate + phosphate. Its pathway is metabolic intermediate biosynthesis; chorismate biosynthesis; chorismate from D-erythrose 4-phosphate and phosphoenolpyruvate: step 7/7. Functionally, catalyzes the anti-1,4-elimination of the C-3 phosphate and the C-6 proR hydrogen from 5-enolpyruvylshikimate-3-phosphate (EPSP) to yield chorismate, which is the branch point compound that serves as the starting substrate for the three terminal pathways of aromatic amino acid biosynthesis. This reaction introduces a second double bond into the aromatic ring system. The sequence is that of Chorismate synthase from Chelativorans sp. (strain BNC1).